We begin with the raw amino-acid sequence, 362 residues long: Alkanal monooxygenase alpha chain (362 aa).

It belongs to the bacterial luciferase oxidoreductase family. As to quaternary structure, heterodimer of an alpha and a beta chain.

It catalyses the reaction a long-chain fatty aldehyde + FMNH2 + O2 = a long-chain fatty acid + hnu + FMN + H2O + 2 H(+). Light-emitting reaction in luminous bacteria. This chain is Alkanal monooxygenase alpha chain (luxA), found in Photorhabdus luminescens (Xenorhabdus luminescens).